The primary structure comprises 387 residues: Putative serine/threonine-protein kinase (387 aa).

The 330-residue stretch at 15-344 (YQIEKLLNRG…ERVLEGQVEI (330 aa)) folds into the Protein kinase domain. Residues 21-29 (LNRGGMDSY) and K55 contribute to the ATP site. The Proton acceptor role is filled by D164. The next 2 helical transmembrane spans lie at 232-252 (PPNA…MLVG) and 363-383 (SIFT…LLIF).

Belongs to the protein kinase superfamily. Ser/Thr protein kinase family.

Its subcellular location is the cell membrane. The catalysed reaction is L-seryl-[protein] + ATP = O-phospho-L-seryl-[protein] + ADP + H(+). The enzyme catalyses L-threonyl-[protein] + ATP = O-phospho-L-threonyl-[protein] + ADP + H(+). This chain is Putative serine/threonine-protein kinase, found in Mycoplasma genitalium (strain ATCC 33530 / DSM 19775 / NCTC 10195 / G37) (Mycoplasmoides genitalium).